A 305-amino-acid chain; its full sequence is MRIVFMGTPGFAEVILRALVENKNNHIEVVGLFTQRDKPFGRKKELKAPETKTYILENRLNIPIFQPQSLKEPEVQILKDLKPDFIVVVAYGKILPKEILAIAPCINVHASLLPKYRGASPIHEMILNDDKIYGISTMLMDLELDSGDILESASFLREDYLDLDALSLKLAHMGATLLLSTLKNFHSITRKPQDHTQATFCKKITKADGLVGFKDAKNLFLKSLAFKSWPEIFLENNLKLLEVELVENEKSHKEGEILRIDEKGVLVGCLKGSVCIAWLQAVGKKPLKAKDYLNGKRLKVGGILA.

Position 111-114 (111-114 (SLLP)) interacts with (6S)-5,6,7,8-tetrahydrofolate.

It belongs to the Fmt family.

It carries out the reaction L-methionyl-tRNA(fMet) + (6R)-10-formyltetrahydrofolate = N-formyl-L-methionyl-tRNA(fMet) + (6S)-5,6,7,8-tetrahydrofolate + H(+). Functionally, attaches a formyl group to the free amino group of methionyl-tRNA(fMet). The formyl group appears to play a dual role in the initiator identity of N-formylmethionyl-tRNA by promoting its recognition by IF2 and preventing the misappropriation of this tRNA by the elongation apparatus. In Helicobacter pylori (strain P12), this protein is Methionyl-tRNA formyltransferase.